The following is a 142-amino-acid chain: MKTFTAKPETVKRDWYVVDASGKTLGRLATELARRLRGKHKAEYTPHVDTGDYIIVLNAEKVAVTGNKRTDKIYYHHTGFVGGIKQATFEEMIARRPERVIEIAVKGMLPKGPLGRAMYRKLKVYAGTEHNHAAQQPQVLDI.

Belongs to the universal ribosomal protein uL13 family. In terms of assembly, part of the 50S ribosomal subunit.

Its function is as follows. This protein is one of the early assembly proteins of the 50S ribosomal subunit, although it is not seen to bind rRNA by itself. It is important during the early stages of 50S assembly. This Yersinia pseudotuberculosis serotype O:1b (strain IP 31758) protein is Large ribosomal subunit protein uL13.